We begin with the raw amino-acid sequence, 178 residues long: RNA pyrophosphohydrolase (178 aa).

The Nudix hydrolase domain maps to 18 to 171 (PYRPCVGLMV…KRKVYEQVVA (154 aa)). The Nudix box motif lies at 59-80 (GGIDKGEDPAQAALRELYEETG).

This sequence belongs to the Nudix hydrolase family. RppH subfamily. It depends on a divalent metal cation as a cofactor.

Accelerates the degradation of transcripts by removing pyrophosphate from the 5'-end of triphosphorylated RNA, leading to a more labile monophosphorylated state that can stimulate subsequent ribonuclease cleavage. In Brucella canis (strain ATCC 23365 / NCTC 10854 / RM-666), this protein is RNA pyrophosphohydrolase.